The primary structure comprises 246 residues: Sugar fermentation stimulation protein homolog (246 aa).

Belongs to the SfsA family.

The chain is Sugar fermentation stimulation protein homolog from Prochlorococcus marinus (strain MIT 9301).